The chain runs to 484 residues: Malonate-semialdehyde dehydrogenase 1 (484 aa).

5 residues coordinate NAD(+): Phe154, Lys178, Glu181, Arg182, and Ser231. Residue Cys286 is the Nucleophile of the active site. An NAD(+)-binding site is contributed by Glu384.

Belongs to the aldehyde dehydrogenase family. IolA subfamily. In terms of assembly, homotetramer.

It catalyses the reaction 3-oxopropanoate + NAD(+) + CoA + H2O = hydrogencarbonate + acetyl-CoA + NADH + H(+). The enzyme catalyses 2-methyl-3-oxopropanoate + NAD(+) + CoA + H2O = propanoyl-CoA + hydrogencarbonate + NADH + H(+). It functions in the pathway polyol metabolism; myo-inositol degradation into acetyl-CoA; acetyl-CoA from myo-inositol: step 7/7. Catalyzes the oxidation of malonate semialdehyde (MSA) and methylmalonate semialdehyde (MMSA) into acetyl-CoA and propanoyl-CoA, respectively. Is involved in a myo-inositol catabolic pathway. Bicarbonate, and not CO2, is the end-product of the enzymatic reaction. In Bacillus licheniformis (strain ATCC 14580 / DSM 13 / JCM 2505 / CCUG 7422 / NBRC 12200 / NCIMB 9375 / NCTC 10341 / NRRL NRS-1264 / Gibson 46), this protein is Malonate-semialdehyde dehydrogenase 1.